We begin with the raw amino-acid sequence, 348 residues long: Short-wave-sensitive opsin 1 (348 aa).

The Extracellular portion of the chain corresponds to Met1–Ala33. Asn14 carries an N-linked (GlcNAc...) asparagine glycan. Residues Phe34–Ala58 form a helical membrane-spanning segment. Topologically, residues Thr59 to Asn70 are cytoplasmic. A helical membrane pass occupies residues Tyr71–Cys96. Residues Asn97–Glu110 are Extracellular-facing. Cys107 and Cys184 are disulfide-bonded. A helical transmembrane segment spans residues Gly111 to Phe130. The Cytoplasmic segment spans residues Glu131–His149. Residues Ala150 to Ser173 form a helical membrane-spanning segment. The Extracellular portion of the chain corresponds to Arg174–Ser199. A helical transmembrane segment spans residues Tyr200 to Leu227. The Cytoplasmic portion of the chain corresponds to Lys228–Arg249. Residues Met250–Val273 traverse the membrane as a helical segment. The Extracellular segment spans residues Asn274–Asp281. The helical transmembrane segment at Leu282–Met306 threads the bilayer. Lys293 carries the N6-(retinylidene)lysine modification. The Cytoplasmic segment spans residues Asn307–Asn348.

Belongs to the G-protein coupled receptor 1 family. Opsin subfamily. Phosphorylated on some or all of the serine and threonine residues present in the C-terminal region.

The protein localises to the cell membrane. The protein resides in the photoreceptor inner segment. Its subcellular location is the cell projection. It is found in the cilium. It localises to the photoreceptor outer segment. The protein localises to the cytoplasm. The protein resides in the perinuclear region. Visual pigments are the light-absorbing molecules that mediate vision. They consist of an apoprotein, opsin, covalently linked to cis-retinal. Required for the maintenance of cone outer segment organization in the ventral retina, but not essential for the maintenance of functioning cone photoreceptors. Involved in ensuring correct abundance and localization of retinal membrane proteins. May increase spectral sensitivity in dim light. This is Short-wave-sensitive opsin 1 (OPN1SW) from Pan paniscus (Pygmy chimpanzee).